The chain runs to 368 residues: ATP-dependent (S)-NAD(P)H-hydrate dehydratase (368 aa).

In terms of domain architecture, YjeF C-terminal spans 13-357 (LFKKVRKIVP…DEVHESFLEL (345 aa)). (6S)-NADPHX contacts are provided by residues Gly125 and 178–184 (NVNEFSR). ATP is bound by residues 231–235 (KGPHD) and 250–259 (GGLKRSGGQG). Asp260 is a (6S)-NADPHX binding site.

Belongs to the NnrD/CARKD family. It depends on Mg(2+) as a cofactor.

The protein localises to the cytoplasm. It catalyses the reaction (6S)-NADHX + ATP = ADP + phosphate + NADH + H(+). It carries out the reaction (6S)-NADPHX + ATP = ADP + phosphate + NADPH + H(+). Catalyzes the dehydration of the S-form of NAD(P)HX at the expense of ATP, which is converted to ADP. Together with NAD(P)HX epimerase, which catalyzes the epimerization of the S- and R-forms, the enzyme allows the repair of both epimers of NAD(P)HX, a damaged form of NAD(P)H that is a result of enzymatic or heat-dependent hydration. The protein is ATP-dependent (S)-NAD(P)H-hydrate dehydratase of Aspergillus fumigatus (strain ATCC MYA-4609 / CBS 101355 / FGSC A1100 / Af293) (Neosartorya fumigata).